A 321-amino-acid chain; its full sequence is uncharacterized protein (321 aa).

This is an uncharacterized protein from Galliformes (FAdV-1).